The following is a 1032-amino-acid chain: Histone lysine demethylase PHF8 (1032 aa).

Residues 5 to 56 form a PHD-type zinc finger; that stretch reads PVYCLCRLPYDVTRFMIECDVCQDWFHGSCVGVEEDKAAEIDLYHCPNCQVT. Residues 65-83 form a linker region; it reads RRGAVKHADVGLGRDSGRP. The JmjC domain occupies 199–355; sequence FSDTRLSNLV…MQLRAYEIEK (157 aa). T248 is a binding site for substrate. Positions 251 and 253 each coordinate Fe cation. A substrate-binding site is contributed by K268. Position 323 (H323) interacts with Fe cation. Disordered stretches follow at residues 455–515, 577–660, 697–857, 875–923, and 943–1015; these read SGTP…KGKE, QGKK…VDFD, LDSA…REGA, QQEQ…EPPV, and EYTA…ATAK. Residues 473-483 show a composition bias toward polar residues; it reads QLNTPLTFSQH. Positions 583–592 are enriched in low complexity; the sequence is AGSANGAGSS. Positions 620-632 are enriched in basic residues; that stretch reads PRRRPSLPSKKKL. A compositionally biased stretch (basic and acidic residues) spans 644–655; it reads PCSDPHRIREPG. 2 stretches are compositionally biased toward low complexity: residues 699 to 710 and 724 to 739; these read SALSEEAPASPS and PPSSSSSSSSSSPLSI. The span at 774 to 784 shows a compositional bias: basic residues; sequence PGKRPIKRPAR. Basic and acidic residues predominate over residues 848-857; sequence KQERPVREGA. A compositionally biased stretch (basic residues) spans 882-891; the sequence is ITKRKYTKKK. The segment covering 970 to 990 has biased composition (low complexity); it reads SRRPSLSPQNSSSYSPSAPSP.

This sequence belongs to the JHDM1 histone demethylase family. JHDM1D subfamily. Fe(2+) serves as cofactor.

Its subcellular location is the nucleus. It is found in the nucleolus. The catalysed reaction is N(6),N(6)-dimethyl-L-lysyl(36)-[histone H3] + 2 2-oxoglutarate + 2 O2 = L-lysyl(36)-[histone H3] + 2 formaldehyde + 2 succinate + 2 CO2. It carries out the reaction N(6),N(6)-dimethyl-L-lysyl(9)-[histone H3] + 2 2-oxoglutarate + 2 O2 = L-lysyl(9)-[histone H3] + 2 formaldehyde + 2 succinate + 2 CO2. Its function is as follows. Histone lysine demethylase with selectivity for the di- and monomethyl states that plays a key role cell cycle progression, rDNA transcription and brain development. Demethylates mono- and dimethylated histone H3 'Lys-9' residue (H3K9Me1 and H3K9Me2), dimethylated H3 'Lys-27' (H3K27Me2) and monomethylated histone H4 'Lys-20' residue (H4K20Me1). Acts as a transcription activator as H3K9Me1, H3K9Me2, H3K27Me2 and H4K20Me1 are epigenetic repressive marks. Involved in cell cycle progression by being required to control G1-S transition. Acts as a coactivator of rDNA transcription, by activating polymerase I (pol I) mediated transcription of rRNA genes. Has activity toward H4K20Me1 only when nucleosome is used as a substrate and when not histone octamer is used as substrate. Required for brain development, probably by regulating expression of neuron-specific genes. This is Histone lysine demethylase PHF8 (phf8) from Danio rerio (Zebrafish).